Here is a 420-residue protein sequence, read N- to C-terminus: Acetyl-CoA acetyltransferase, mitochondrial (420 aa).

Residues 1 to 26 (MTSRALYSTRSQLCRHLAHKYLSRSY) constitute a mitochondrion transit peptide. The Acyl-thioester intermediate role is filled by Cys119. CoA-binding positions include Tyr212, 251 to 253 (KVD), and Lys256. Tyr212 provides a ligand contact to K(+). The K(+) site is built by Ala273, Ala274, and Ala276. Ser277 is a binding site for CoA. Val374 is a binding site for K(+). The Proton donor/acceptor role is filled by Cys406.

The protein belongs to the thiolase-like superfamily. Thiolase family. As to quaternary structure, homotetramer.

Its subcellular location is the mitochondrion. The catalysed reaction is 2 acetyl-CoA = acetoacetyl-CoA + CoA. It catalyses the reaction propanoyl-CoA + acetyl-CoA = 2-methyl-3-oxobutanoyl-CoA + CoA. It participates in lipid metabolism; fatty acid beta-oxidation. In terms of biological role, this is one of the enzymes that catalyzes the last step of the mitochondrial beta-oxidation pathway, an aerobic process breaking down fatty acids into acetyl-CoA. Using free coenzyme A/CoA, catalyzes the thiolytic cleavage of medium- to long-chain 3-oxoacyl-CoAs into acetyl-CoA and a fatty acyl-CoA shortened by two carbon atoms. The activity of the enzyme is reversible and it can also catalyze the condensation of two acetyl-CoA molecules into acetoacetyl-CoA. Thereby, it plays a major role in ketone body metabolism. The protein is Acetyl-CoA acetyltransferase, mitochondrial (acat1) of Danio rerio (Zebrafish).